The primary structure comprises 218 residues: Ras-related protein Rab-4A (218 aa).

9 residues coordinate GTP: G23, T24, G25, K26, S27, C28, S42, H44, and T45. Residue S27 coordinates Mg(2+). The Switch 1 motif lies at 44–49 (HTIGVE). Residues T45 and D68 each coordinate Mg(2+). The short motif at 70-79 (AGQERFRSVT) is the Switch 2 element. G71 serves as a coordination point for GTP. Q72 is modified (5-glutamyl serotonin). GTP contacts are provided by N126, K127, D129, A157, and L158. S190 carries the post-translational modification Phosphoserine. S204 is subject to Phosphoserine; by CDK1. S-geranylgeranyl cysteine attachment occurs at residues C216 and C218. C218 bears the Cysteine methyl ester mark.

The protein belongs to the small GTPase superfamily. Rab family. As to quaternary structure, interacts with RAB11FIP1, RABEP1, ZFYVE20 and RUFY1. Interacts with SGSM1, SGSM2 and SGSM3. Interacts (membrane-bound form) with NDRG1; the interaction involves NDRG1 in vesicular recycling of E-cadherin. Interacts (in GTP-bound form) with GRIPAP1. Interacts with RABEP1 and RBSN. Does not interact with HPS4. The cofactor is Mg(2+). In terms of processing, serotonylation of Gln-72 by TGM2 during activation and aggregation of platelets leads to constitutive activation of GTPase activity. Phosphorylated by CDK1 kinase during mitosis.

The protein resides in the membrane. It localises to the cytoplasm. Its subcellular location is the early endosome membrane. The protein localises to the recycling endosome membrane. It carries out the reaction GTP + H2O = GDP + phosphate + H(+). Its activity is regulated as follows. Regulated by guanine nucleotide exchange factors (GEFs) which promote the exchange of bound GDP for free GTP. Regulated by GTPase activating proteins (GAPs) which increase the GTP hydrolysis activity. Inhibited by GDP dissociation inhibitors (GDIs). Functionally, the small GTPases Rab are key regulators of intracellular membrane trafficking, from the formation of transport vesicles to their fusion with membranes. Rabs cycle between an inactive GDP-bound form and an active GTP-bound form that is able to recruit to membranes different sets of downstream effectors directly responsible for vesicle formation, movement, tethering and fusion. RAB4A is involved in protein transport. Also plays a role in vesicular traffic. Mediates VEGFR2 endosomal trafficking to enhance VEGFR2 signaling. Acts as a regulator of platelet alpha-granule release during activation and aggregation of platelets. The sequence is that of Ras-related protein Rab-4A (RAB4A) from Bos taurus (Bovine).